A 348-amino-acid chain; its full sequence is Protein RecA (348 aa).

66 to 73 contributes to the ATP binding site; the sequence is GPESSGKT.

It belongs to the RecA family.

Its subcellular location is the cytoplasm. Can catalyze the hydrolysis of ATP in the presence of single-stranded DNA, the ATP-dependent uptake of single-stranded DNA by duplex DNA, and the ATP-dependent hybridization of homologous single-stranded DNAs. It interacts with LexA causing its activation and leading to its autocatalytic cleavage. The protein is Protein RecA of Legionella pneumophila (strain Paris).